Reading from the N-terminus, the 692-residue chain is Elongation factor G 1 (692 aa).

In terms of domain architecture, tr-type G spans 8 to 283; it reads EKTRNIGIMA…SVVEYLPSPV (276 aa). Residues 17–24, 81–85, and 135–138 contribute to the GTP site; these read AHIDAGKT, DTPGH, and NKMD.

The protein belongs to the TRAFAC class translation factor GTPase superfamily. Classic translation factor GTPase family. EF-G/EF-2 subfamily.

The protein resides in the cytoplasm. Functionally, catalyzes the GTP-dependent ribosomal translocation step during translation elongation. During this step, the ribosome changes from the pre-translocational (PRE) to the post-translocational (POST) state as the newly formed A-site-bound peptidyl-tRNA and P-site-bound deacylated tRNA move to the P and E sites, respectively. Catalyzes the coordinated movement of the two tRNA molecules, the mRNA and conformational changes in the ribosome. In Geobacter metallireducens (strain ATCC 53774 / DSM 7210 / GS-15), this protein is Elongation factor G 1.